We begin with the raw amino-acid sequence, 358 residues long: Gibberellin receptor GID1B (358 aa).

At alanine 2 the chain carries N-acetylalanine. Positions 113–115 match the Involved in the stabilization of the negatively charged intermediate by the formation of the oxyanion hole motif; sequence HGG. Gibberellin A4 contacts are provided by residues 115–116, tyrosine 127, and serine 191; that span reads GS. 4 residues coordinate gibberellin A3: serine 116, tyrosine 127, serine 191, and phenylalanine 238. Serine 191 is an active-site residue. Aspartate 289 is an active-site residue. Residue glycine 320 coordinates gibberellin A4. Gibberellin A3 is bound at residue glycine 320.

This sequence belongs to the 'GDXG' lipolytic enzyme family. Interacts with the DELLA proteins GAI, RGA, RGL1, RGL2 and RGL3 in a GA-dependent manner. In terms of tissue distribution, widely expressed.

The protein resides in the nucleus. Functions as a soluble gibberellin (GA) receptor. GA is an essential hormone that regulates growth and development in plants. Binds with high affinity the biologically active gibberellin GA4, but has no affinity for the biologically inactive GAs. In response to GA, interacts with specific DELLA proteins, known as repressors of GA-induced growth, and targets them for degradation via proteasome. Seems to be required for GA signaling that controls root growth, seed germination and flower development. May function as a dominant GA receptor at low GA concentrations in germination. Partially redundant with GID1A and GID1C. This chain is Gibberellin receptor GID1B (GID1B), found in Arabidopsis thaliana (Mouse-ear cress).